Here is a 561-residue protein sequence, read N- to C-terminus: Urocanate hydratase (561 aa).

Residues 52–53, Gln-130, 176–178, Glu-196, Arg-201, 242–243, 263–267, 273–274, and Tyr-322 contribute to the NAD(+) site; these read GG, GMG, NA, QTSAH, and YL. The active site involves Cys-410. Gly-492 contributes to the NAD(+) binding site.

This sequence belongs to the urocanase family. NAD(+) is required as a cofactor.

Its subcellular location is the cytoplasm. It catalyses the reaction 4-imidazolone-5-propanoate = trans-urocanate + H2O. It participates in amino-acid degradation; L-histidine degradation into L-glutamate; N-formimidoyl-L-glutamate from L-histidine: step 2/3. In terms of biological role, catalyzes the conversion of urocanate to 4-imidazolone-5-propionate. This is Urocanate hydratase from Salmonella choleraesuis (strain SC-B67).